The chain runs to 128 residues: NADH-quinone oxidoreductase subunit A (128 aa).

3 helical membrane passes run 12 to 32 (FAIF…LSFL), 66 to 86 (FYLI…LYAW), and 96 to 116 (LGFY…VYLV).

The protein belongs to the complex I subunit 3 family. As to quaternary structure, NDH-1 is composed of 14 different subunits. Subunits NuoA, H, J, K, L, M, N constitute the membrane sector of the complex.

Its subcellular location is the cell membrane. It carries out the reaction a quinone + NADH + 5 H(+)(in) = a quinol + NAD(+) + 4 H(+)(out). Its function is as follows. NDH-1 shuttles electrons from NADH, via FMN and iron-sulfur (Fe-S) centers, to quinones in the respiratory chain. The immediate electron acceptor for the enzyme in this species is believed to be ubiquinone. Couples the redox reaction to proton translocation (for every two electrons transferred, four hydrogen ions are translocated across the cytoplasmic membrane), and thus conserves the redox energy in a proton gradient. This is NADH-quinone oxidoreductase subunit A from Baumannia cicadellinicola subsp. Homalodisca coagulata.